The chain runs to 131 residues: MSNVPTELKYTASHEWVLNEGDGVYCVGITEHAQELLGDMVFMDLPEVGATFSAGEDCAVAESVKAASDIYAPISGEIVAVNDDLEASPELVNSAPYTDGWLFKIKATDDSEVNELLDAAAYQAAIDEEDE.

The Lipoyl-binding domain occupies 24-106 (VYCVGITEHA…YTDGWLFKIK (83 aa)). Lys65 carries the post-translational modification N6-lipoyllysine.

Belongs to the GcvH family. The glycine cleavage system is composed of four proteins: P, T, L and H. (R)-lipoate is required as a cofactor.

The glycine cleavage system catalyzes the degradation of glycine. The H protein shuttles the methylamine group of glycine from the P protein to the T protein. This chain is Glycine cleavage system H protein, found in Sodalis glossinidius (strain morsitans).